The following is a 211-amino-acid chain: Ribosomal RNA small subunit methyltransferase G (211 aa).

S-adenosyl-L-methionine is bound by residues G75, L80, 130–131 (VE), and R145.

It belongs to the methyltransferase superfamily. RNA methyltransferase RsmG family.

Its subcellular location is the cytoplasm. It catalyses the reaction guanosine(527) in 16S rRNA + S-adenosyl-L-methionine = N(7)-methylguanosine(527) in 16S rRNA + S-adenosyl-L-homocysteine. Its function is as follows. Specifically methylates the N7 position of guanine in position 527 of 16S rRNA. The sequence is that of Ribosomal RNA small subunit methyltransferase G from Aromatoleum aromaticum (strain DSM 19018 / LMG 30748 / EbN1) (Azoarcus sp. (strain EbN1)).